Here is a 273-residue protein sequence, read N- to C-terminus: Formamidopyrimidine-DNA glycosylase (273 aa).

Catalysis depends on Pro2, which acts as the Schiff-base intermediate with DNA. The active-site Proton donor is Glu3. Lys59 (proton donor; for beta-elimination activity) is an active-site residue. Residues His92 and Arg111 each contribute to the DNA site. Residues 239-273 (KVYGKTDEPCVVCGKPIEKIKLNGRGTHFCPNCQK) form an FPG-type zinc finger. Arg263 acts as the Proton donor; for delta-elimination activity in catalysis.

Belongs to the FPG family. Monomer. The cofactor is Zn(2+).

The catalysed reaction is Hydrolysis of DNA containing ring-opened 7-methylguanine residues, releasing 2,6-diamino-4-hydroxy-5-(N-methyl)formamidopyrimidine.. The enzyme catalyses 2'-deoxyribonucleotide-(2'-deoxyribose 5'-phosphate)-2'-deoxyribonucleotide-DNA = a 3'-end 2'-deoxyribonucleotide-(2,3-dehydro-2,3-deoxyribose 5'-phosphate)-DNA + a 5'-end 5'-phospho-2'-deoxyribonucleoside-DNA + H(+). Its function is as follows. Involved in base excision repair of DNA damaged by oxidation or by mutagenic agents. Acts as a DNA glycosylase that recognizes and removes damaged bases. Has a preference for oxidized purines, such as 7,8-dihydro-8-oxoguanine (8-oxoG). Has AP (apurinic/apyrimidinic) lyase activity and introduces nicks in the DNA strand. Cleaves the DNA backbone by beta-delta elimination to generate a single-strand break at the site of the removed base with both 3'- and 5'-phosphates. In Listeria monocytogenes serotype 4b (strain F2365), this protein is Formamidopyrimidine-DNA glycosylase.